Reading from the N-terminus, the 409-residue chain is Putative competence-damage inducible protein (409 aa).

The protein belongs to the CinA family.

The polypeptide is Putative competence-damage inducible protein (Clostridium botulinum (strain Kyoto / Type A2)).